Consider the following 270-residue polypeptide: Mlc titration factor A (270 aa).

Zn(2+) is bound by residues His-111, His-148, His-152, and Glu-211.

This sequence belongs to the MtfA family. As to quaternary structure, interacts with Mlc. Requires Zn(2+) as cofactor.

It is found in the cytoplasm. Functionally, involved in the modulation of the activity of the glucose-phosphotransferase system (glucose-PTS). Interacts with the transcriptional repressor Mlc, preventing its interaction with DNA and leading to the modulation of expression of genes regulated by Mlc, including ptsG, which encodes the PTS system glucose-specific EIICB component. Its function is as follows. Shows zinc-dependent metallopeptidase activity. The chain is Mlc titration factor A from Yersinia pestis bv. Antiqua (strain Nepal516).